The sequence spans 310 residues: Small ribosomal subunit protein uS2 (310 aa).

Over residues 249-272 (WERDLLEGEKAEKKDDAEAAEKPA) the composition is skewed to basic and acidic residues. The segment at 249–310 (WERDLLEGEK…EAPAADAEQA (62 aa)) is disordered. Residues 273-310 (EAPAAEAPAAEAAEAPAAEAAPAEEPAAEAPAADAEQA) are compositionally biased toward low complexity.

It belongs to the universal ribosomal protein uS2 family.

The protein is Small ribosomal subunit protein uS2 (rpsB) of Streptomyces coelicolor (strain ATCC BAA-471 / A3(2) / M145).